The following is a 129-amino-acid chain: Cytochrome c oxidase subunit 5B, mitochondrial (129 aa).

The transit peptide at 1-31 (MASRLLRGAGALAAQTLRARGPNGVAVVRSM) directs the protein to the mitochondrion. An N6-acetyllysine mark is found at K68 and K86. Residues C91, C93, C113, and C116 each coordinate Zn(2+). An N6-acetyllysine modification is found at K121.

This sequence belongs to the cytochrome c oxidase subunit 5B family. As to quaternary structure, component of the cytochrome c oxidase (complex IV, CIV), a multisubunit enzyme composed of 14 subunits. The complex is composed of a catalytic core of 3 subunits MT-CO1, MT-CO2 and MT-CO3, encoded in the mitochondrial DNA, and 11 supernumerary subunits COX4I, COX5A, COX5B, COX6A, COX6B, COX6C, COX7A, COX7B, COX7C, COX8 and NDUFA4, which are encoded in the nuclear genome. The complex exists as a monomer or a dimer and forms supercomplexes (SCs) in the inner mitochondrial membrane with NADH-ubiquinone oxidoreductase (complex I, CI) and ubiquinol-cytochrome c oxidoreductase (cytochrome b-c1 complex, complex III, CIII), resulting in different assemblies (supercomplex SCI(1)III(2)IV(1) and megacomplex MCI(2)III(2)IV(2)).

Its subcellular location is the mitochondrion inner membrane. It participates in energy metabolism; oxidative phosphorylation. In terms of biological role, component of the cytochrome c oxidase, the last enzyme in the mitochondrial electron transport chain which drives oxidative phosphorylation. The respiratory chain contains 3 multisubunit complexes succinate dehydrogenase (complex II, CII), ubiquinol-cytochrome c oxidoreductase (cytochrome b-c1 complex, complex III, CIII) and cytochrome c oxidase (complex IV, CIV), that cooperate to transfer electrons derived from NADH and succinate to molecular oxygen, creating an electrochemical gradient over the inner membrane that drives transmembrane transport and the ATP synthase. Cytochrome c oxidase is the component of the respiratory chain that catalyzes the reduction of oxygen to water. Electrons originating from reduced cytochrome c in the intermembrane space (IMS) are transferred via the dinuclear copper A center (CU(A)) of subunit 2 and heme A of subunit 1 to the active site in subunit 1, a binuclear center (BNC) formed by heme A3 and copper B (CU(B)). The BNC reduces molecular oxygen to 2 water molecules using 4 electrons from cytochrome c in the IMS and 4 protons from the mitochondrial matrix. The protein is Cytochrome c oxidase subunit 5B, mitochondrial (COX5B) of Sus scrofa (Pig).